The chain runs to 72 residues: Large ribosomal subunit protein bL31 (72 aa).

It belongs to the bacterial ribosomal protein bL31 family. Type A subfamily. As to quaternary structure, part of the 50S ribosomal subunit.

Its function is as follows. Binds the 23S rRNA. This is Large ribosomal subunit protein bL31 from Prosthecochloris aestuarii (strain DSM 271 / SK 413).